The chain runs to 172 residues: Capsid protein (172 aa).

A disordered region spans residues 1-26; that stretch reads MASKWNWSGTKGRRTPRRPYGRPYKS. The span at 11–20 shows a compositional bias: basic residues; that stretch reads KGRRTPRRPY.

Belongs to the nanoviridae capsid protein family.

Its subcellular location is the virion. This Faba bean necrotic yellows virus (isolate Syrian SV292-88) (FBNYV) protein is Capsid protein (DNA-S).